The following is a 393-amino-acid chain: Stearoyl-[acyl-carrier-protein] 9-desaturase, chloroplastic (393 aa).

The transit peptide at 1-30 (MALNFNSPTFQSIKTTRRPCSPLRSPRVFM) directs the protein to the chloroplast. Residues Glu135, Glu173, His176, Glu226, Glu259, and His262 each coordinate Fe cation.

This sequence belongs to the fatty acid desaturase type 2 family. In terms of assembly, homodimer. It depends on Fe(2+) as a cofactor.

It is found in the plastid. It localises to the chloroplast. The catalysed reaction is octadecanoyl-[ACP] + 2 reduced [2Fe-2S]-[ferredoxin] + O2 + 2 H(+) = (9Z)-octadecenoyl-[ACP] + 2 oxidized [2Fe-2S]-[ferredoxin] + 2 H2O. Its pathway is lipid metabolism; fatty acid metabolism. Functionally, converts stearoyl-ACP to oleoyl-ACP by introduction of a cis double bond between carbons 9 and 10 of the acyl chain. This chain is Stearoyl-[acyl-carrier-protein] 9-desaturase, chloroplastic, found in Solanum commersonii (Commerson's wild potato).